We begin with the raw amino-acid sequence, 323 residues long: Iron-sulfur cluster transfer protein NUBPL (323 aa).

Residue 65–72 (AKGGVGKS) participates in ATP binding.

Belongs to the Mrp/NBP35 ATP-binding proteins family. The cofactor is [4Fe-4S] cluster.

It localises to the mitochondrion. Functionally, iron-sulfur cluster transfer protein involved in the assembly of the mitochondrial membrane respiratory chain NADH dehydrogenase (Complex I). May deliver one or more Fe-S clusters to complex I subunits. The chain is Iron-sulfur cluster transfer protein NUBPL (nubpl) from Dictyostelium discoideum (Social amoeba).